The primary structure comprises 492 residues: Replication factor C large subunit (492 aa).

46 to 53 (GPPGSGKT) provides a ligand contact to ATP. The interval 445-492 (VIPKRPKISDNQISEILTKDNNPKDDVKKASKKPESTSKKQATLDKFF) is disordered. Basic and acidic residues predominate over residues 461–482 (LTKDNNPKDDVKKASKKPESTS).

It belongs to the activator 1 small subunits family. RfcL subfamily. Heteromultimer composed of small subunits (RfcS) and large subunits (RfcL).

Its function is as follows. Part of the RFC clamp loader complex which loads the PCNA sliding clamp onto DNA. This Methanococcus vannielii (strain ATCC 35089 / DSM 1224 / JCM 13029 / OCM 148 / SB) protein is Replication factor C large subunit.